The following is a 592-amino-acid chain: Calnexin (592 aa).

The first 20 residues, 1 to 20 (MEGKWLLCMLLVLGTAIVEA), serve as a signal peptide directing secretion. Over 21–481 (HDGHDDDVID…QMIEAAEERP (461 aa)) the chain is Lumenal. Residues Ser74 and Asp117 each coordinate Ca(2+). Lys137 is modified (N6-acetyllysine). Cys160 and Cys194 form a disulfide bridge. An alpha-D-glucoside-binding residues include Tyr164, Lys166, Tyr185, and Asp192. The segment at 260-345 (GNLLNDMTPP…AEKPEDWDED (86 aa)) is disordered. The span at 274 to 319 (REIEDPEDRKPEDWDERPKIPDPEAVKPDDWDEDAPAKIPDEEATK) shows a compositional bias: basic and acidic residues. The interval 276 to 409 (IEDPEDRKPE…RKIPNPDFFE (134 aa)) is p domain (Extended arm). 5 tandem repeats follow at residues 278 to 290 (DPEDRKPEDWDER), 295 to 307 (DPEAVKPDDWDED), 314 to 326 (DEEATKPEGWLDD), 333 to 345 (DPDAEKPEDWDED), and 348 to 358 (GEWEAPQIANP). 4 X approximate repeats stretches follow at residues 278 to 345 (DPED…WDED) and 348 to 405 (GEWE…IPNP). Over residues 323-345 (WLDDEPEYVPDPDAEKPEDWDED) the composition is skewed to acidic residues. The interaction with PPIB stretch occupies residues 326–359 (DEPEYVPDPDAEKPEDWDEDMDGEWEAPQIANPR). A disulfide bridge connects residues Cys360 and Cys366. 3 consecutive repeat copies span residues 367–377 (GVWQRPVIDNP), 381–391 (GKWKPPMIDNP), and 395–405 (GIWKPRKIPNP). An alpha-D-glucoside is bound at residue Glu425. Asp436 serves as a coordination point for Ca(2+). The helical transmembrane segment at 482–502 (WLWVVYILTVALPVFLVILFC) threads the bilayer. S-palmitoyl cysteine attachment occurs at residues Cys502 and Cys503. Over 503 to 592 (CSGKKQTSGM…SPRNRKPRRE (90 aa)) the chain is Cytoplasmic. Residues 503–592 (CSGKKQTSGM…SPRNRKPRRE (90 aa)) are sufficient to mediate interaction with SGIP1. The segment at 511–592 (GMEYKKTDAP…SPRNRKPRRE (82 aa)) is disordered. Acidic residues predominate over residues 525 to 547 (KEEEEEKEEEKDKGDEEEEGEEK). Position 554 is a phosphoserine (Ser554). Phosphothreonine is present on Thr562. Ser564 bears the Phosphoserine; by MAPK3 mark. The residue at position 583 (Ser583) is a Phosphoserine.

The protein belongs to the calreticulin family. Interacts with MAPK3/ERK1. Interacts with KCNH2. Associates with ribosomes. Interacts with SGIP1; involved in negative regulation of endocytosis. The palmitoylated form interacts with the ribosome-translocon complex component SSR1, promoting efficient folding of glycoproteins. Interacts with SERPINA2P/SERPINA2 and with the S and Z variants of SERPINA1. Interacts with PPIB. Interacts with ZNRF4. Interacts with SMIM22. Interacts with TMX2. Interacts with TMEM35A/NACHO. Interacts with CHRNA7. Interacts with reticulophagy regulators RETREG2 and RETREG3. Interacts with DNM1L; may form part of a larger protein complex at the ER-mitochondrial interface during mitochondrial fission. Interacts with ADAM7. As to quaternary structure, (Microbial infection) Interacts with HBV large envelope protein, isoform L. In terms of assembly, (Microbial infection) Interacts with HBV large envelope protein, isoform M; this association may be essential for isoform M proper secretion. In terms of processing, phosphorylated at Ser-564 by MAPK3/ERK1. Phosphorylation by MAPK3/ERK1 increases its association with ribosomes. Palmitoylation by DHHC6 leads to the preferential localization to the perinuclear rough ER. It mediates the association of calnexin with the ribosome-translocon complex (RTC) which is required for efficient folding of glycosylated proteins. Post-translationally, ubiquitinated, leading to proteasomal degradation. Probably ubiquitinated by ZNRF4.

It is found in the endoplasmic reticulum membrane. The protein resides in the mitochondrion membrane. It localises to the melanosome membrane. Calcium-binding protein that interacts with newly synthesized monoglucosylated glycoproteins in the endoplasmic reticulum. It may act in assisting protein assembly and/or in the retention within the ER of unassembled protein subunits. It seems to play a major role in the quality control apparatus of the ER by the retention of incorrectly folded proteins. Associated with partial T-cell antigen receptor complexes that escape the ER of immature thymocytes, it may function as a signaling complex regulating thymocyte maturation. Additionally it may play a role in receptor-mediated endocytosis at the synapse. This chain is Calnexin (CANX), found in Homo sapiens (Human).